A 338-amino-acid chain; its full sequence is Phenylalanine--tRNA ligase alpha subunit (338 aa).

Glutamate 252 contributes to the Mg(2+) binding site.

Belongs to the class-II aminoacyl-tRNA synthetase family. Phe-tRNA synthetase alpha subunit type 1 subfamily. As to quaternary structure, tetramer of two alpha and two beta subunits. Requires Mg(2+) as cofactor.

Its subcellular location is the cytoplasm. The enzyme catalyses tRNA(Phe) + L-phenylalanine + ATP = L-phenylalanyl-tRNA(Phe) + AMP + diphosphate + H(+). This Aquifex aeolicus (strain VF5) protein is Phenylalanine--tRNA ligase alpha subunit (pheS).